The following is a 437-amino-acid chain: O-antigen export system ATP-binding protein RfbB (437 aa).

The region spanning 37–256 (LRGKRQSRDA…YREAISLAEA (220 aa)) is the ABC transporter domain. Residue 69–76 (GRNGSGKS) coordinates ATP.

This sequence belongs to the ABC transporter superfamily.

It is found in the cell inner membrane. Its function is as follows. May form an ATP-driven O-antigen export apparatus, in association with RfbA. The polypeptide is O-antigen export system ATP-binding protein RfbB (rfbB) (Myxococcus xanthus).